Consider the following 320-residue polypeptide: MDFLTLMENKLDEGRMITFEEAVELAKGKIEDEKLFLLADKLCKKNMGRRVDLCSIINAKSGGCSENCKFCAQSGHYDTGVKIYPLLDVDDVLKAAKENEKEGVHRFSLVTSGKSVSDEEFEKILGIYSVLRKETNLKLCASLGSLSYERAVRLKEAGVSMYHHNIETCREYYPKICDTHTYDDRINTVKNAAKAGLEICCGGIIGMGESMEQRIKMAFEIRELGVKSVPINVLNPIKGTPFENVRSLSPDEILRTIALFRLIMPYAHIRYAGGRMCLGEHQSKGFKAGVSAMLVGNYLTTVGNKISDDLEMIQRMGLEI.

In terms of domain architecture, Radical SAM core spans 46-275; that stretch reads NMGRRVDLCS…YAHIRYAGGR (230 aa). The [4Fe-4S] cluster site is built by C64, C68, and C71. [2Fe-2S] cluster contacts are provided by S108, C140, C200, and R270.

Belongs to the radical SAM superfamily. Biotin synthase family. In terms of assembly, homodimer. It depends on [4Fe-4S] cluster as a cofactor. [2Fe-2S] cluster serves as cofactor.

The catalysed reaction is (4R,5S)-dethiobiotin + (sulfur carrier)-SH + 2 reduced [2Fe-2S]-[ferredoxin] + 2 S-adenosyl-L-methionine = (sulfur carrier)-H + biotin + 2 5'-deoxyadenosine + 2 L-methionine + 2 oxidized [2Fe-2S]-[ferredoxin]. It functions in the pathway cofactor biosynthesis; biotin biosynthesis; biotin from 7,8-diaminononanoate: step 2/2. Its function is as follows. Catalyzes the conversion of dethiobiotin (DTB) to biotin by the insertion of a sulfur atom into dethiobiotin via a radical-based mechanism. This is Biotin synthase from Acetivibrio thermocellus (strain ATCC 27405 / DSM 1237 / JCM 9322 / NBRC 103400 / NCIMB 10682 / NRRL B-4536 / VPI 7372) (Clostridium thermocellum).